Reading from the N-terminus, the 534-residue chain is Pentatricopeptide repeat-containing protein At5g08305 (534 aa).

11 PPR repeats span residues 41 to 71 (PFVSQTLSFSALSSSGDVDYAYKFLSKLSDP), 72 to 106 (PNYGWNFVIRGFSNSRNPEKSISVYIQMLRFGLLP), 107 to 141 (DHMTYPFLMKSSSRLSNRKLGGSLHCSVVKSGLEW), 142 to 172 (DLFICNTLIHMYGSFRDQASARKLFDEMPHK), 173 to 203 (NLVTWNSILDAYAKSGDVVSARLVFDEMSER), 204 to 238 (DVVTWSSMIDGYVKRGEYNKALEIFDQMMRMGSSK), 240 to 274 (NEVTMVSVICACAHLGALNRGKTVHRYILDVHLPL), 275 to 305 (TVILQTSLIDMYAKCGSIGDAWSVFYRASVK), 308 to 342 (DALMWNAIIGGLASHGFIRESLQLFHKMRESKIDP), 343 to 377 (DEITFLCLLAACSHGGLVKEAWHFFKSLKESGAEP), and 378 to 408 (KSEHYACMVDVLSRAGLVKDAHDFISEMPIK). Residues 413–488 (MLGALLNGCI…IAGHSILDLD (76 aa)) are type E motif. Positions 489 to 519 (GTRHRFIAHDKTHFHSDKIYAVLQLTGAWMN) are type E(+) motif.

It belongs to the PPR family. PCMP-E subfamily.

This Arabidopsis thaliana (Mouse-ear cress) protein is Pentatricopeptide repeat-containing protein At5g08305 (PCMP-E105).